Reading from the N-terminus, the 205-residue chain is Cyanate hydratase (205 aa).

Residues Arg-133, Glu-136, and Ser-159 contribute to the active site.

It belongs to the cyanase family.

The catalysed reaction is cyanate + hydrogencarbonate + 3 H(+) = NH4(+) + 2 CO2. In terms of biological role, catalyzes the reaction of cyanate with bicarbonate to produce ammonia and carbon dioxide. The polypeptide is Cyanate hydratase (Thalassiosira pseudonana (Marine diatom)).